Reading from the N-terminus, the 206-residue chain is Large ribosomal subunit protein uL4 (206 aa).

Positions 43–78 (ARSGNRKQKDREEVKHTTKKPWRQKGTGRARAGMSS) are disordered. Basic and acidic residues predominate over residues 49–58 (KQKDREEVKH). Over residues 59-70 (TTKKPWRQKGTG) the composition is skewed to basic residues.

The protein belongs to the universal ribosomal protein uL4 family. As to quaternary structure, part of the 50S ribosomal subunit.

In terms of biological role, one of the primary rRNA binding proteins, this protein initially binds near the 5'-end of the 23S rRNA. It is important during the early stages of 50S assembly. It makes multiple contacts with different domains of the 23S rRNA in the assembled 50S subunit and ribosome. Functionally, forms part of the polypeptide exit tunnel. This is Large ribosomal subunit protein uL4 from Ralstonia pickettii (strain 12J).